We begin with the raw amino-acid sequence, 213 residues long: Adenylate kinase (213 aa).

Residue 10–15 (GAGKGT) coordinates ATP. The tract at residues 30-59 (AVGDIFRTIIKTSTSEAELINNYVKQGALI) is NMP. AMP-binding positions include arginine 36, 57 to 59 (ALI), 85 to 88 (GYPR), and glutamine 92. Residues 123 to 161 (GRYSCKNCGKIYNVHFLQPKTDYVCDVCSSNVFDYRRDD) form an LID region. An ATP-binding site is contributed by arginine 124. Cysteine 127 and cysteine 130 together coordinate Zn(2+). Position 133–134 (133–134 (IY)) interacts with ATP. 2 residues coordinate Zn(2+): cysteine 147 and cysteine 150. AMP-binding residues include arginine 158 and arginine 169. An ATP-binding site is contributed by lysine 197.

This sequence belongs to the adenylate kinase family. In terms of assembly, monomer.

The protein resides in the cytoplasm. The catalysed reaction is AMP + ATP = 2 ADP. The protein operates within purine metabolism; AMP biosynthesis via salvage pathway; AMP from ADP: step 1/1. Functionally, catalyzes the reversible transfer of the terminal phosphate group between ATP and AMP. Plays an important role in cellular energy homeostasis and in adenine nucleotide metabolism. This is Adenylate kinase from Rickettsia typhi (strain ATCC VR-144 / Wilmington).